The following is a 249-amino-acid chain: MSKSKLLIGFHAVTARLRHDARSIDEIYFEANRRDRRMQDFLKAAEAAGVRMIPADNERLRGIAGTDRHQGVVAKAEALSLALNLDELLDGIEGPPLLLVLDGVTDPHNLGACLRVADAAGAHAVIAPKDRSVGINTTVAKVASGAAETVPYITVTNLARTLRELQQRGVWVIGTADEAEQDLYRADFKGPIALVMGAEGEGMRRLTRETCDTLVSIPMAGSVESLNVSVASGVCLFEAVRQRSVVPAK.

Residues glycine 197, isoleucine 217, and leucine 226 each coordinate S-adenosyl-L-methionine.

It belongs to the class IV-like SAM-binding methyltransferase superfamily. RNA methyltransferase TrmH family. RlmB subfamily.

The protein resides in the cytoplasm. It catalyses the reaction guanosine(2251) in 23S rRNA + S-adenosyl-L-methionine = 2'-O-methylguanosine(2251) in 23S rRNA + S-adenosyl-L-homocysteine + H(+). In terms of biological role, specifically methylates the ribose of guanosine 2251 in 23S rRNA. In Ralstonia nicotianae (strain ATCC BAA-1114 / GMI1000) (Ralstonia solanacearum), this protein is 23S rRNA (guanosine-2'-O-)-methyltransferase RlmB.